The primary structure comprises 249 residues: MWYLLLPTALLLTVSSGVGAGLQKAVVNLDPEWVRVLEEDCVILRCQGTFSPEDNSTKWFHNKSLISHQDANYVIQSARVKDSGMYRCQTAFSALSDPVQLDVHADWLLLQTTKRLFQEGDPIRLRCHSWRNTPVFKVTYLQNGKGKKYFHRNSELSISKATHADSGSYFCRGIIGRNNISSASLQISIGDPTSPSSFLPWHQITFCLLIGLLFAIDTVLYFSVQRSLQSSVAVYEEPKLHWSKEPQDK.

The N-terminal stretch at 1–20 (MWYLLLPTALLLTVSSGVGA) is a signal peptide. Over 21-203 (GLQKAVVNLD…SPSSFLPWHQ (183 aa)) the chain is Extracellular. Ig-like C2-type domains follow at residues 31-103 (PEWV…QLDV) and 117-188 (FQEG…LQIS). 2 cysteine pairs are disulfide-bonded: Cys46/Cys88 and Cys127/Cys171. N-linked (GlcNAc...) asparagine glycosylation is found at Asn55 and Asn62. Residue Asn179 is glycosylated (N-linked (GlcNAc...) asparagine). Residues 204-224 (ITFCLLIGLLFAIDTVLYFSV) form a helical membrane-spanning segment. At 225-249 (QRSLQSSVAVYEEPKLHWSKEPQDK) the chain is on the cytoplasmic side. Tyr235 carries the phosphotyrosine modification.

In terms of assembly, forms a heterooligomeric complex with ITAM-containing signaling subunits FCER1G. Interacts (via transmembrane domain) with signaling subunits; this interaction is a prerequisite for receptor complex expression on the cell surface and intracellular signal transduction. Binds the Fc region of antigen-complexed IgG. Post-translationally, N-glycosylated. In terms of processing, phosphorylated following receptor ligation.

It is found in the cell membrane. Functionally, receptor for the invariable Fc fragment of immunoglobulin gamma (IgG). Binds with intermediate affinity to both IgG2a and IgG2b. Can bind to IgG2a and IgG2b monomers. Does not display binding to IgG1 or IgG3. Recognizes neutralizing virus-specific IgGs displayed on the cell surface of infected cells and triggers antibody-dependent cellular cytotoxicity (ADCC). Confers protection to lethal influenza virus infection. On splenic dendritic cells, uptakes antigen immune complexes and efficiently divert them into MHC class I and II antigen presentation pathways to provide for superior priming of CD4-positive and CD8-positive T cell immune responses. Mediates neutrophil activation by IgG complexes redundantly with FCGR2A. Plays a role in promoting bone resorption by enhancing osteoclast differentiation following binding to IgG2a. Also acts as a receptor for the Fc region of immunoglobulin epsilon (IgE). Binds with low affinity to both the a and b allotypes of IgE. Has also been shown to bind to IgE allotype a only but not to allotype b. Binds aggregated IgE but not the monomeric form and bound monomeric IgG is readily displaced by IgE complexes. Binding to IgE promotes macrophage-mediated phagocytosis, antigen presentation to T cells, production of pro-inflammatory cytokines and the late phase of cutaneous allergic reactions. Mediates enhanced ADCC in response to afucosylated IgGs. The chain is Low affinity immunoglobulin gamma Fc region receptor III-A from Rattus norvegicus (Rat).